We begin with the raw amino-acid sequence, 413 residues long: MAINKVSSKPVCRDGVKKVVVAYSGGLDTSIILSWVKENYGCEVVACCVDVGQGKELEGLDEKAKKTGASKSYIIDAKKEFVTNYIYPTIKVNALYENKYYLGTSLARPIIAEKIADVVKKEKADAVCHGATGKGNDQVRFELAFKSLMPNVKIIAPWREWDIKSREDAIDYAKKRDISVPVTKAKPYSSDANLWHISYEGGVLEDLENEYDESMFKMTVSPEKAPDKPMYLAIAFEQGIPVSIDGNKFTPVELITKLNEIAGANSIGRADIVENRLVGMKSRGVYESPAAAVLYAAHEELESISIDRDTLHFKQLLAHKYAEIAYYGLWFSPLREALDAFINETQKYVTGSIKLKLYKGNIIIVARQAKYSLYSEKLATFEKDEIYNHKDAEGFINLWGLPTKMQAMLRKSE.

22–30 (AYSGGLDTS) lines the ATP pocket. L-citrulline-binding residues include Tyr-100 and Ser-105. Position 130 (Gly-130) interacts with ATP. Thr-132, Asn-136, and Asp-137 together coordinate L-aspartate. Residue Asn-136 participates in L-citrulline binding. The L-citrulline site is built by Arg-140, Ser-189, Ser-198, Glu-274, and Tyr-286.

It belongs to the argininosuccinate synthase family. Type 1 subfamily. As to quaternary structure, homotetramer.

It is found in the cytoplasm. It carries out the reaction L-citrulline + L-aspartate + ATP = 2-(N(omega)-L-arginino)succinate + AMP + diphosphate + H(+). Its pathway is amino-acid biosynthesis; L-arginine biosynthesis; L-arginine from L-ornithine and carbamoyl phosphate: step 2/3. This Endomicrobium trichonymphae protein is Argininosuccinate synthase.